A 463-amino-acid chain; its full sequence is Interleukin enhancer-binding factor 2 (463 aa).

Asymmetric dimethylarginine; alternate is present on Arg94. Arg94 is modified (omega-N-methylarginine; alternate). Residues 108–444 enclose the DZF domain; that stretch reads RHILAYDWLA…PEKKEGEEEE (337 aa). At Arg145 the chain carries Omega-N-methylarginine. A Glycyl lysine isopeptide (Lys-Gly) (interchain with G-Cter in ubiquitin) cross-link involves residue Lys166. Residues Ser173 and Ser189 each carry the phosphoserine modification. Residues Lys259 and Lys437 each participate in a glycyl lysine isopeptide (Lys-Gly) (interchain with G-Cter in SUMO2) cross-link. The interval 424 to 463 is disordered; that stretch reads VTPSEKAYEKPPEKKEGEEEEENTEEPPQGEEEESMETQE. Residues 429–440 show a composition bias toward basic and acidic residues; the sequence is KAYEKPPEKKEG. Residues 441–463 show a composition bias toward acidic residues; the sequence is EEEEENTEEPPQGEEEESMETQE. Thr461 is modified (phosphothreonine).

Forms heterodimers with ILF3. ILF2-ILF3 heterodimers may also bind to PRKDC/XRCC7: this may stabilize the interaction of PRKDC/XRCC7 and the heterodimeric complex of G22P1/KU70 and XRCC5/KU80. Forms a complex with ILF3, YLPM1, KHDRBS1, RBMX, NCOA5 and PPP1CA. Identified in a IGF2BP1-dependent mRNP granule complex containing untranslated mRNAs. Interacts with IGF2BP1. Interacts with CRBN; this interaction promotes ubiquitination and subsequent degradation of ILF2. In terms of processing, ubiquitinated at Lys-166 by CRBN with polyubiquitin chains by the CUL4-RING E3 ligase (CRL4-CRBN) and then degraded by the proteasome.

The protein localises to the nucleus. It localises to the nucleolus. The protein resides in the cytoplasm. Chromatin-interacting protein that forms a stable heterodimer with interleukin enhancer-binding factor 3/ILF3 and plays a role in several biological processes including transcription, innate immunity or cell growth. Essential for the efficient reshuttling of ILF3 (isoform 1 and isoform 2) into the nucleus. Together with ILF3, forms an RNA-binding complex that is required for mitotic progression and cytokinesis by regulating the expression of a cluster of mitotic genes. Mechanistically, competes with STAU1/STAU2-mediated mRNA decay. Plays also a role in the inhibition of various viruses including Japanese encephalitis virus or enterovirus 71. The polypeptide is Interleukin enhancer-binding factor 2 (Ilf2) (Rattus norvegicus (Rat)).